Consider the following 346-residue polypeptide: Ketol-acid reductoisomerase (NADP(+)) (346 aa).

Positions 1 to 141 (KKNSILKKNQ…GAHHAGVLES (141 aa)) constitute a KARI N-terminal Rossmann domain. Residues S11 and 41–43 (DKQ) contribute to the NADP(+) site. The active site involves H65. G91 lines the NADP(+) pocket. KARI C-terminal knotted domains lie at 142-286 (SFVA…PEQE) and 287-346 (YYDH…NKVI). Positions 150, 154, 322, and 326 each coordinate Mg(2+).

This sequence belongs to the ketol-acid reductoisomerase family. It depends on Mg(2+) as a cofactor.

It carries out the reaction (2R)-2,3-dihydroxy-3-methylbutanoate + NADP(+) = (2S)-2-acetolactate + NADPH + H(+). The enzyme catalyses (2R,3R)-2,3-dihydroxy-3-methylpentanoate + NADP(+) = (S)-2-ethyl-2-hydroxy-3-oxobutanoate + NADPH + H(+). It participates in amino-acid biosynthesis; L-isoleucine biosynthesis; L-isoleucine from 2-oxobutanoate: step 2/4. The protein operates within amino-acid biosynthesis; L-valine biosynthesis; L-valine from pyruvate: step 2/4. Involved in the biosynthesis of branched-chain amino acids (BCAA). Catalyzes an alkyl-migration followed by a ketol-acid reduction of (S)-2-acetolactate (S2AL) to yield (R)-2,3-dihydroxy-isovalerate. In the isomerase reaction, S2AL is rearranged via a Mg-dependent methyl migration to produce 3-hydroxy-3-methyl-2-ketobutyrate (HMKB). In the reductase reaction, this 2-ketoacid undergoes a metal-dependent reduction by NADPH to yield (R)-2,3-dihydroxy-isovalerate. In Buchnera aphidicola subsp. Uroleucon rurale, this protein is Ketol-acid reductoisomerase (NADP(+)) (ilvC).